Here is a 271-residue protein sequence, read N- to C-terminus: Interleukin-1 alpha (271 aa).

Residues 1–112 (MAKVPDMFED…DSEEEIIKPR (112 aa)) constitute a propeptide that is removed on maturation. Position 82 is an N6-acetyllysine (K82). Residues 82–86 (KKRRL) are nuclear localization signal (NLS). S87 is modified (phosphoserine). N102, N121, N137, N141, and N211 each carry an N-linked (GlcNAc...) asparagine glycan.

It belongs to the IL-1 family. Monomer. Interacts with TMED10; the interaction mediates the translocation from the cytoplasm into the ERGIC (endoplasmic reticulum-Golgi intermediate compartment) and thereby secretion. Interacts with IL1R1. Interacts with S100A13; this interaction is the first step in the export of IL1A, followed by direct translocation of this complex across the plasma membrane. Acetylated within its nuclear localization sequence, which impacts subcellular localization. Post-translationally, proteolytic processed by CAPN1 in a calcium-dependent manner. Cleavage from 31 kDa precursor to 18 kDa biologically active molecules. In terms of processing, phosphorylated. Phosphorylation greatly enhances susceptibility to digestion and promotes the conversion of pre-IL1A alpha to the biologically active IL1A.

It localises to the nucleus. The protein resides in the cytoplasm. Its subcellular location is the secreted. Its function is as follows. Cytokine constitutively present intracellularly in nearly all resting non-hematopoietic cells that plays an important role in inflammation and bridges the innate and adaptive immune systems. After binding to its receptor IL1R1 together with its accessory protein IL1RAP, forms the high affinity interleukin-1 receptor complex. Signaling involves the recruitment of adapter molecules such as MYD88, IRAK1 or IRAK4. In turn, mediates the activation of NF-kappa-B and the three MAPK pathways p38, p42/p44 and JNK pathways. Within the cell, acts as an alarmin and cell death results in its liberation in the extracellular space after disruption of the cell membrane to induce inflammation and alert the host to injury or damage. In addition to its role as a danger signal, which occurs when the cytokine is passively released by cell necrosis, directly senses DNA damage and acts as signal for genotoxic stress without loss of cell integrity. This chain is Interleukin-1 alpha (IL1A), found in Macaca mulatta (Rhesus macaque).